The sequence spans 237 residues: Ribose-5-phosphate isomerase A (237 aa).

Substrate-binding positions include 32 to 35 (TGRT), 85 to 88 (DGAD), and 99 to 102 (KGGG). Residue E108 is the Proton acceptor of the active site. R126 serves as a coordination point for substrate.

This sequence belongs to the ribose 5-phosphate isomerase family. In terms of assembly, homodimer.

The catalysed reaction is aldehydo-D-ribose 5-phosphate = D-ribulose 5-phosphate. It functions in the pathway carbohydrate degradation; pentose phosphate pathway; D-ribose 5-phosphate from D-ribulose 5-phosphate (non-oxidative stage): step 1/1. In terms of biological role, catalyzes the reversible conversion of ribose-5-phosphate to ribulose 5-phosphate. This chain is Ribose-5-phosphate isomerase A, found in Aeropyrum pernix (strain ATCC 700893 / DSM 11879 / JCM 9820 / NBRC 100138 / K1).